Here is a 467-residue protein sequence, read N- to C-terminus: MSPDELVYLGILAATIPVGFLFRYLSPPVKQGAALLLGLIISIATCGIHTLHSLCTVLGTWIIIKINWRSAPALSLAWTFLYLLFFRLVTWFGLPQPTPFANAIQLLLTLKMVSLANEVQSYHLERKKEVSTFTKSPVVAGLSHEPSLYDIISYSYCYVGIMTGPFFRYQTYADWLQQSSPLSLPGKEPCLQRLKMVPVYGLLFIAVNSVFPLSYVRTEDFLEHNYFYRFFYMVAIFFVFRMRFYSAWCGAEAGCISAGLGCYPQGALSKPGGGPTVKYSPDPETAVEYDFKTIQNIDCYNTDFCVKVRHGMRYWNMTVQWWLHHYIYPNAPFRAYALRAGWTMLISAYWHGLHAGYYLSFLTIPLCIAAETAMEASVRARLGPAGQNIFDWIHWFLKMRAYDYMCMGFVLLKASDTISYWSSIYFVIHIIAIVCIAVGQFMKGGRKREKRERGEGEKEDAVREKAE.

The Cytoplasmic portion of the chain corresponds to 1–5 (MSPDE). Residues 6-22 (LVYLGILAATIPVGFLF) traverse the membrane as a helical segment. Over 23–33 (RYLSPPVKQGA) the chain is Lumenal. The helical transmembrane segment at 34–57 (ALLLGLIISIATCGIHTLHSLCTV) threads the bilayer. Residues 58 to 73 (LGTWIIIKINWRSAPA) lie on the Cytoplasmic side of the membrane. The chain crosses the membrane as a helical span at residues 74–93 (LSLAWTFLYLLFFRLVTWFG). Topologically, residues 94–193 (LPQPTPFANA…LPGKEPCLQR (100 aa)) are lumenal. The helical transmembrane segment at 194-211 (LKMVPVYGLLFIAVNSVF) threads the bilayer. The Cytoplasmic portion of the chain corresponds to 212-230 (PLSYVRTEDFLEHNYFYRF). The helical transmembrane segment at 231-260 (FYMVAIFFVFRMRFYSAWCGAEAGCISAGL) threads the bilayer. At 261 to 421 (GCYPQGALSK…LKASDTISYW (161 aa)) the chain is on the lumenal side. Asn316 carries N-linked (GlcNAc...) asparagine glycosylation. Residues 422–442 (SSIYFVIHIIAIVCIAVGQFM) traverse the membrane as a helical segment. Residues 443–467 (KGGRKREKRERGEGEKEDAVREKAE) lie on the Cytoplasmic side of the membrane. The disordered stretch occupies residues 447–467 (KREKRERGEGEKEDAVREKAE). A compositionally biased stretch (basic and acidic residues) spans 451–467 (RERGEGEKEDAVREKAE).

This sequence belongs to the membrane-bound acyltransferase family.

It localises to the endoplasmic reticulum membrane. The enzyme catalyses a 1-acyl-sn-glycero-3-phospho-(1D-myo-inositol) + (5Z,8Z,11Z,14Z)-eicosatetraenoyl-CoA = a 1-acyl-2-(5Z,8Z,11Z,14Z-eicosatetraenoyl)-sn-glycero-3-phospho-(1D-myo-inositol) + CoA. The catalysed reaction is (5Z,8Z,11Z,14Z)-eicosatetraenoyl-CoA + 1-hexadecanoyl-sn-glycero-3-phosphocholine = 1-hexadecanoyl-2-(5Z,8Z,11Z,14Z-eicosatetraenoyl)-sn-glycero-3-phosphocholine + CoA. It carries out the reaction a 1-acyl-sn-glycero-3-phospho-(1D-myo-inositol) + an acyl-CoA = a 1,2-diacyl-sn-glycero-3-phospho-(1D-myo-inositol) + CoA. It catalyses the reaction 1-octadecanoyl-sn-glycero-3-phospho-(1D-myo-inositol) + (5Z,8Z,11Z,14Z)-eicosatetraenoyl-CoA = 1-octadecanoyl-2-(5Z,8Z,11Z,14Z-eicosatetraenoyl)-sn-glycero-3-phospho-(1D-myo-inositol) + CoA. It functions in the pathway lipid metabolism; phospholipid metabolism. In terms of biological role, acyltransferase which catalyzes the transfer of an acyl group from an acyl-CoA to a lysophosphatidylinositol (1-acylglycerophosphatidylinositol or LPI) leading to the production of a phosphatidylinositol (1,2-diacyl-sn-glycero-3-phosphoinositol or PI) and participates in the reacylation step of the phospholipid remodeling pathway also known as the Lands cycle. Prefers arachidonoyl-CoA as the acyl donor, thus contributing to the regulation of free levels arachidonic acid in cell. The protein is Membrane-bound acylglycerophosphatidylinositol O-acyltransferase mboat7 (mboat7) of Danio rerio (Zebrafish).